Reading from the N-terminus, the 686-residue chain is Mannan-binding lectin serine protease 2 (686 aa).

Residues 1-15 (MRLLTLLGLLCGSVA) form the signal peptide. The 122-residue stretch at 16–137 (TPLGPKWPEP…TGFEAFYAAE (122 aa)) folds into the CUB 1 domain. 8 residues coordinate Ca(2+): E67, D75, D120, S122, N123, D138, I139, and E141. An intrachain disulfide couples C72 to C90. The EGF-like; calcium-binding domain occupies 138–181 (DIDECQVAPGEAPTCDHHCHNHLGGFYCSCRAGYVLHRNKRTCS). Cystine bridges form between C142–C156, C152–C165, C167–C180, C184–C211, C241–C259, C300–C348, C328–C361, C366–C412, C396–C430, C434–C552, C598–C618, and C629–C660. Residues N158, H159, and G162 each contribute to the Ca(2+) site. N158 carries the post-translational modification (3R)-3-hydroxyasparagine. A CUB 2 domain is found at 184 to 296 (CSGQVFTQRS…TGWKIHYTST (113 aa)). 2 Sushi domains span residues 298–363 (QPCP…ACSI) and 364–432 (VDCG…VCEP). Residues 445–684 (IYGGQKAKPG…YIPWIENIIS (240 aa)) form the Peptidase S1 domain. Catalysis depends on charge relay system residues H483 and D532. Catalysis depends on S633, which acts as the Charge relay system.

The protein belongs to the peptidase S1 family. Homodimer; disulfide-linked. Binds MBL2. Isoform 2 binds to MASP1. Binds SERPING1. Dimerization and MBL2 binding requires calcium ions. The iron and 2-oxoglutarate dependent 3-hydroxylation of aspartate and asparagine is (R) stereospecific within EGF domains. Post-translationally, activated by cleavage after Arg-444. The uncleaved zymogen is inactive towards synthetic substrates, but has sufficient activity to effect autocatalytic cleavage. In terms of tissue distribution, plasma.

It is found in the secreted. It carries out the reaction Selective cleavage after Arg-223 in complement component C2 (-Ser-Leu-Gly-Arg-|-Lys-Ile-Gln-Ile) and after Arg-76 in complement component C4 (-Gly-Leu-Gln-Arg-|-Ala-Leu-Glu-Ile).. In terms of biological role, serum protease that plays an important role in the activation of the complement system via mannose-binding lectin. After activation by auto-catalytic cleavage it cleaves C2 and C4, leading to their activation and to the formation of C3 convertase. The protein is Mannan-binding lectin serine protease 2 (MASP2) of Homo sapiens (Human).